The primary structure comprises 611 residues: UvrABC system protein C (611 aa).

The GIY-YIG domain maps to 6 to 84; the sequence is NNPGVYRMFN…IKRLRPRFNV (79 aa). The UVR domain maps to 194–229; the sequence is QSVKDHLAAAMQAASADLDFEHAAVYRDRLAALSHV.

The protein belongs to the UvrC family. As to quaternary structure, interacts with UvrB in an incision complex.

It localises to the cytoplasm. Functionally, the UvrABC repair system catalyzes the recognition and processing of DNA lesions. UvrC both incises the 5' and 3' sides of the lesion. The N-terminal half is responsible for the 3' incision and the C-terminal half is responsible for the 5' incision. This Brucella abortus (strain 2308) protein is UvrABC system protein C.